The chain runs to 85 residues: Translation initiation factor IF-1 1 (85 aa).

Residues 1–72 form the S1-like domain; sequence MAKEELIEMS…SKGRITFRHL (72 aa).

Belongs to the IF-1 family. In terms of assembly, component of the 30S ribosomal translation pre-initiation complex which assembles on the 30S ribosome in the order IF-2 and IF-3, IF-1 and N-formylmethionyl-tRNA(fMet); mRNA recruitment can occur at any time during PIC assembly.

It is found in the cytoplasm. Functionally, one of the essential components for the initiation of protein synthesis. Stabilizes the binding of IF-2 and IF-3 on the 30S subunit to which N-formylmethionyl-tRNA(fMet) subsequently binds. Helps modulate mRNA selection, yielding the 30S pre-initiation complex (PIC). Upon addition of the 50S ribosomal subunit IF-1, IF-2 and IF-3 are released leaving the mature 70S translation initiation complex. The polypeptide is Translation initiation factor IF-1 1 (Aromatoleum aromaticum (strain DSM 19018 / LMG 30748 / EbN1) (Azoarcus sp. (strain EbN1))).